The chain runs to 1240 residues: Pectate lyase L (1240 aa).

The first 26 residues, 1 to 26 (MRNCKGLSILLCFLLVFFAMPFPAVA), serve as a signal peptide directing secretion. Has catalytic activity regions lie at residues 27-551 (EEAE…VTVR) and 545-1240 (TLKV…KSIK). Positions 325, 349, 350, 1049, 1073, 1074, and 1077 each coordinate Ca(2+). Lys-1117 serves as the catalytic Proton acceptor.

The protein belongs to the polysaccharide lyase 9 family. It depends on Ca(2+) as a cofactor.

It is found in the secreted. The catalysed reaction is Eliminative cleavage of (1-&gt;4)-alpha-D-galacturonan to give oligosaccharides with 4-deoxy-alpha-D-galact-4-enuronosyl groups at their non-reducing ends.. Its activity is regulated as follows. Inhibited by the metal chelator ethylenediaminetetraacetic acid (EDTA). Its function is as follows. Cleaves polygalacturonate or partially methylated pectin. When assayed on polygalacturonate or on pectin, it releases monogalacturonate as the principal product. This is Pectate lyase L from Thermoclostridium stercorarium (Clostridium stercorarium).